The sequence spans 299 residues: SET domain-containing protein 9 (299 aa).

The region spanning 122-295 (FSVAQATSSL…QGEELFSNYY (174 aa)) is the SET domain. Residue Tyr-294 participates in S-adenosyl-L-methionine binding.

It belongs to the class V-like SAM-binding methyltransferase superfamily.

This is SET domain-containing protein 9 (SETD9) from Homo sapiens (Human).